The primary structure comprises 116 residues: Co-chaperonin GroES (116 aa).

The protein belongs to the GroES chaperonin family. Heptamer of 7 subunits arranged in a ring. Interacts with the chaperonin GroEL.

Its subcellular location is the cytoplasm. Together with the chaperonin GroEL, plays an essential role in assisting protein folding. The GroEL-GroES system forms a nano-cage that allows encapsulation of the non-native substrate proteins and provides a physical environment optimized to promote and accelerate protein folding. GroES binds to the apical surface of the GroEL ring, thereby capping the opening of the GroEL channel. This chain is Co-chaperonin GroES, found in Mycoplasma pneumoniae (strain ATCC 29342 / M129 / Subtype 1) (Mycoplasmoides pneumoniae).